Reading from the N-terminus, the 118-residue chain is Fluoride-specific ion channel FluC 1 (118 aa).

4 helical membrane-spanning segments follow: residues 5-25, 34-54, 56-76, and 98-118; these read FVLVGFGAALGAMLRYGISVL, FPFATFFINITGSFLLGFLVS, ALGPVWQLFLGTGFMGGYTTF, and YLGCTYVFGLIAAFLGLMLGV. Positions 71 and 74 each coordinate Na(+).

This sequence belongs to the fluoride channel Fluc/FEX (TC 1.A.43) family.

It is found in the cell membrane. The catalysed reaction is fluoride(in) = fluoride(out). Its activity is regulated as follows. Na(+) is not transported, but it plays an essential structural role and its presence is essential for fluoride channel function. Its function is as follows. Fluoride-specific ion channel. Important for reducing fluoride concentration in the cell, thus reducing its toxicity. The chain is Fluoride-specific ion channel FluC 1 from Listeria monocytogenes serotype 4b (strain F2365).